The following is a 527-amino-acid chain: Probable guanine deaminase (527 aa).

Zn(2+) contacts are provided by H79 and H81. Residues 81–84, 212–213, 239–242, and D329 contribute to the substrate site; these read HAPQ, RF, and HISE. Residues H239 and D329 each coordinate Zn(2+).

This sequence belongs to the metallo-dependent hydrolases superfamily. ATZ/TRZ family. It depends on Zn(2+) as a cofactor.

The enzyme catalyses guanine + H2O + H(+) = xanthine + NH4(+). Its pathway is purine metabolism; guanine degradation; xanthine from guanine: step 1/1. Functionally, catalyzes the hydrolytic deamination of guanine, producing xanthine and ammonia. The protein is Probable guanine deaminase of Schizosaccharomyces pombe (strain 972 / ATCC 24843) (Fission yeast).